The primary structure comprises 233 residues: Octanoyltransferase (233 aa).

The BPL/LPL catalytic domain occupies 33 to 216; that stretch reads GRAQDTVILL…HLVRALSSNG (184 aa). Substrate contacts are provided by residues 71–78, 146–148, and 159–161; these read RGGRITWH, AIG, and GFA. Cysteine 177 acts as the Acyl-thioester intermediate in catalysis.

It belongs to the LipB family.

It is found in the cytoplasm. It carries out the reaction octanoyl-[ACP] + L-lysyl-[protein] = N(6)-octanoyl-L-lysyl-[protein] + holo-[ACP] + H(+). Its pathway is protein modification; protein lipoylation via endogenous pathway; protein N(6)-(lipoyl)lysine from octanoyl-[acyl-carrier-protein]: step 1/2. Functionally, catalyzes the transfer of endogenously produced octanoic acid from octanoyl-acyl-carrier-protein onto the lipoyl domains of lipoate-dependent enzymes. Lipoyl-ACP can also act as a substrate although octanoyl-ACP is likely to be the physiological substrate. The sequence is that of Octanoyltransferase from Clavibacter michiganensis subsp. michiganensis (strain NCPPB 382).